A 515-amino-acid polypeptide reads, in one-letter code: Bifunctional purine biosynthesis protein PurH (515 aa).

The MGS-like domain occupies 1–145; that stretch reads MTKRALISVS…KNHASVTVVV (145 aa).

This sequence belongs to the PurH family.

The catalysed reaction is (6R)-10-formyltetrahydrofolate + 5-amino-1-(5-phospho-beta-D-ribosyl)imidazole-4-carboxamide = 5-formamido-1-(5-phospho-D-ribosyl)imidazole-4-carboxamide + (6S)-5,6,7,8-tetrahydrofolate. The enzyme catalyses IMP + H2O = 5-formamido-1-(5-phospho-D-ribosyl)imidazole-4-carboxamide. Its pathway is purine metabolism; IMP biosynthesis via de novo pathway; 5-formamido-1-(5-phospho-D-ribosyl)imidazole-4-carboxamide from 5-amino-1-(5-phospho-D-ribosyl)imidazole-4-carboxamide (10-formyl THF route): step 1/1. The protein operates within purine metabolism; IMP biosynthesis via de novo pathway; IMP from 5-formamido-1-(5-phospho-D-ribosyl)imidazole-4-carboxamide: step 1/1. The protein is Bifunctional purine biosynthesis protein PurH of Streptococcus equi subsp. equi (strain 4047).